Here is a 160-residue protein sequence, read N- to C-terminus: Nucleotide-binding protein VV1636 (160 aa).

This sequence belongs to the YajQ family.

Nucleotide-binding protein. This is Nucleotide-binding protein VV1636 from Vibrio vulnificus (strain YJ016).